The following is a 500-amino-acid chain: Probable malate:quinone oxidoreductase (500 aa).

This sequence belongs to the MQO family. Requires FAD as cofactor.

The enzyme catalyses (S)-malate + a quinone = a quinol + oxaloacetate. Its pathway is carbohydrate metabolism; tricarboxylic acid cycle; oxaloacetate from (S)-malate (quinone route): step 1/1. This is Probable malate:quinone oxidoreductase from Gluconobacter oxydans (strain 621H) (Gluconobacter suboxydans).